A 217-amino-acid polypeptide reads, in one-letter code: Large ribosomal subunit protein bL25 (217 aa).

The tract at residues 185–217 (TKETVEDEEAEEAAAEGAEETGETGETEEGGDE) is disordered. The segment covering 189-217 (VEDEEAEEAAAEGAEETGETGETEEGGDE) has biased composition (acidic residues).

The protein belongs to the bacterial ribosomal protein bL25 family. CTC subfamily. In terms of assembly, part of the 50S ribosomal subunit; part of the 5S rRNA/L5/L18/L25 subcomplex. Contacts the 5S rRNA. Binds to the 5S rRNA independently of L5 and L18.

In terms of biological role, this is one of the proteins that binds to the 5S RNA in the ribosome where it forms part of the central protuberance. The sequence is that of Large ribosomal subunit protein bL25 from Desulfosudis oleivorans (strain DSM 6200 / JCM 39069 / Hxd3) (Desulfococcus oleovorans).